We begin with the raw amino-acid sequence, 308 residues long: GTPase Era (308 aa).

Positions arginine 14–glutamate 181 constitute an Era-type G domain. The segment at glycine 22 to serine 29 is G1. Glycine 22–serine 29 serves as a coordination point for GTP. The G2 stretch occupies residues glutamine 48 to alanine 52. The interval aspartate 69 to glycine 72 is G3. GTP-binding positions include aspartate 69 to isoleucine 73 and asparagine 131 to aspartate 134. Residues asparagine 131 to aspartate 134 form a G4 region. The segment at valine 160–alanine 162 is G5. In terms of domain architecture, KH type-2 spans leucine 212–aspartate 289.

It belongs to the TRAFAC class TrmE-Era-EngA-EngB-Septin-like GTPase superfamily. Era GTPase family. In terms of assembly, monomer.

The protein localises to the cytoplasm. It is found in the cell inner membrane. An essential GTPase that binds both GDP and GTP, with rapid nucleotide exchange. Plays a role in 16S rRNA processing and 30S ribosomal subunit biogenesis and possibly also in cell cycle regulation and energy metabolism. This Afipia carboxidovorans (strain ATCC 49405 / DSM 1227 / KCTC 32145 / OM5) (Oligotropha carboxidovorans) protein is GTPase Era.